A 655-amino-acid chain; its full sequence is Proprotein convertase subtilisin/kexin type 4 (655 aa).

The first 26 residues, 1–26 (MRPSQTELWLGLTLTLALLAVRWASA), serve as a signal peptide directing secretion. Residues 27–110 (QAPIYVSSWA…QQTLRRRVKR (84 aa)) constitute a propeptide that is removed on maturation. The region spanning 123-437 (QWYMNKEIQQ…YGLLDAGLLV (315 aa)) is the Peptidase S8 domain. Catalysis depends on charge relay system residues D155, H196, and S370. Positions 446 to 580 (TKPQKKCAIR…TLLLYGTAED (135 aa)) constitute a P/Homo B domain. N-linked (GlcNAc...) asparagine glycosylation occurs at N472.

This sequence belongs to the peptidase S8 family. Furin subfamily. As to quaternary structure, the proPCSK4 form interacts with HSPA5; the interaction takes place at the endoplasmic reticulum. In terms of processing, N-glycosylated. Post-translationally, synthesized in the endoplasmic reticulum as a zymogen, is matured by autocatalytic cleavage between the prodomain and the catalytic domain. As to expression, expressed abundantly in the testis since postnatal Day 16. In testis, strongly detected in round and elongated spermatids as well as spermatocytes. Also observed in residual bodies engulfed by Sertoli cells at spermatogenic stages VIII and IX. In ovaries, expressed in macrophage-like cells of the ovarian theca, interstitium and corpora lutea.

The protein resides in the cytoplasmic vesicle. The protein localises to the secretory vesicle. It is found in the acrosome membrane. Proprotein convertase involved in the processing of hormone and other protein precursors at sites comprised of pairs of basic amino acid residues. In males, important for ADAM2 processing as well as other acrosomal proteins with roles in fertilization and critical for normal fertilization events such as sperm capacitation, acrosome reaction and binding of sperm to zona pellucida. Also plays a role in female fertility, involved in the regulation of trophoblast migration and placental development, may be through the proteolytical processing and activation of proteins such as IGF2. May also participate in folliculogenesis in the ovaries. This Mus musculus (Mouse) protein is Proprotein convertase subtilisin/kexin type 4 (Pcsk4).